A 158-amino-acid chain; its full sequence is SsrA-binding protein (158 aa).

It belongs to the SmpB family.

The protein localises to the cytoplasm. In terms of biological role, required for rescue of stalled ribosomes mediated by trans-translation. Binds to transfer-messenger RNA (tmRNA), required for stable association of tmRNA with ribosomes. tmRNA and SmpB together mimic tRNA shape, replacing the anticodon stem-loop with SmpB. tmRNA is encoded by the ssrA gene; the 2 termini fold to resemble tRNA(Ala) and it encodes a 'tag peptide', a short internal open reading frame. During trans-translation Ala-aminoacylated tmRNA acts like a tRNA, entering the A-site of stalled ribosomes, displacing the stalled mRNA. The ribosome then switches to translate the ORF on the tmRNA; the nascent peptide is terminated with the 'tag peptide' encoded by the tmRNA and targeted for degradation. The ribosome is freed to recommence translation, which seems to be the essential function of trans-translation. This is SsrA-binding protein from Symbiobacterium thermophilum (strain DSM 24528 / JCM 14929 / IAM 14863 / T).